Here is a 569-residue protein sequence, read N- to C-terminus: Urease subunit alpha (569 aa).

Residues 131-569 (GGIDTHIHFI…LPLAQRYLLL (439 aa)) form the Urease domain. The Ni(2+) site is built by histidine 136, histidine 138, and lysine 219. The residue at position 219 (lysine 219) is an N6-carboxylysine. Histidine 221 contributes to the substrate binding site. Ni(2+)-binding residues include histidine 248 and histidine 274. Histidine 322 serves as the catalytic Proton donor. Position 362 (aspartate 362) interacts with Ni(2+).

This sequence belongs to the metallo-dependent hydrolases superfamily. Urease alpha subunit family. As to quaternary structure, heterotrimer of UreA (gamma), UreB (beta) and UreC (alpha) subunits. Three heterotrimers associate to form the active enzyme. Ni cation is required as a cofactor. Post-translationally, carboxylation allows a single lysine to coordinate two nickel ions.

It is found in the cytoplasm. The catalysed reaction is urea + 2 H2O + H(+) = hydrogencarbonate + 2 NH4(+). It functions in the pathway nitrogen metabolism; urea degradation; CO(2) and NH(3) from urea (urease route): step 1/1. This Synechococcus sp. (strain CC9311) protein is Urease subunit alpha.